We begin with the raw amino-acid sequence, 186 residues long: NADH-dependent FMN reductase SfnF (186 aa).

This sequence belongs to the SsuE family.

The enzyme catalyses FMNH2 + NAD(+) = FMN + NADH + 2 H(+). Involved in the dimethyl sulfide degradation pathway. Catalyzes the NADH-dependent reduction of FMN. This chain is NADH-dependent FMN reductase SfnF, found in Pseudomonas putida (Arthrobacter siderocapsulatus).